Here is a 124-residue protein sequence, read N- to C-terminus: Insulin-like growth factor 1 (124 aa).

The propeptide occupies 1-19; it reads IHFFYLGLCLLTLTSSAAA. Positions 20-48 are b; it reads GPETLCGAELVDALQFVCGDRGFYFSKPT. Disulfide bonds link Cys-25–Cys-67, Cys-37–Cys-80, and Cys-66–Cys-71. Residues 49-60 are c; that stretch reads GYGSSSRRLHHK. The segment at 61-81 is a; it reads GIVDECCFQSCDLRRLEMYCA. The d stretch occupies residues 82-89; the sequence is PIKPPKSA. The interval 86–124 is disordered; the sequence is PKSARSVRAQRHTDMPKAQKEVHLKNTSRGNTGNRNYRM. A propeptide spans 90–124 (e peptide); the sequence is RSVRAQRHTDMPKAQKEVHLKNTSRGNTGNRNYRM. Basic and acidic residues predominate over residues 96 to 109; that stretch reads RHTDMPKAQKEVHL. The span at 110–124 shows a compositional bias: polar residues; sequence KNTSRGNTGNRNYRM.

This sequence belongs to the insulin family.

Its subcellular location is the secreted. The insulin-like growth factors, isolated from plasma, are structurally and functionally related to insulin but have a much higher growth-promoting activity. Acts as a ligand for IGF1R. Binds to the alpha subunit of IGF1R, leading to the activation of the intrinsic tyrosine kinase activity which autophosphorylates tyrosine residues in the beta subunit thus initiatiating a cascade of down-stream signaling events leading to activation of the PI3K-AKT/PKB and the Ras-MAPK pathways. Binds to integrins. Its binding to integrins and subsequent ternary complex formation with integrins and IGFR1 are essential for IGF1 signaling. The chain is Insulin-like growth factor 1 from Coturnix japonica (Japanese quail).